Reading from the N-terminus, the 223-residue chain is Proteasome subunit beta type-1 (223 aa).

This sequence belongs to the peptidase T1B family. In terms of assembly, the 26S proteasome consists of a 20S proteasome core and two 19S regulatory subunits. The 20S proteasome core is composed of 28 subunits that are arranged in four stacked rings, resulting in a barrel-shaped structure. The two end rings are each formed by seven alpha subunits, and the two central rings are each formed by seven beta subunits. The catalytic chamber with the active sites is on the inside of the barrel.

The protein resides in the cytoplasm. It is found in the nucleus. Functionally, non-catalytic component of the proteasome, a multicatalytic proteinase complex which is characterized by its ability to cleave peptides with Arg, Phe, Tyr, Leu, and Glu adjacent to the leaving group at neutral or slightly basic pH. The proteasome has an ATP-dependent proteolytic activity. The sequence is that of Proteasome subunit beta type-1 (PBF1) from Petunia hybrida (Petunia).